Here is a 64-residue protein sequence, read N- to C-terminus: Large ribosomal subunit protein uL29 (64 aa).

The protein belongs to the universal ribosomal protein uL29 family.

The polypeptide is Large ribosomal subunit protein uL29 (Solidesulfovibrio magneticus (strain ATCC 700980 / DSM 13731 / RS-1) (Desulfovibrio magneticus)).